The primary structure comprises 448 residues: MNVYELNMDGLVGQTHHYAGLSSGNIASTNNALSISNPQAAARQGLEKMRQLYNMGLKQGLLPPHQRPNLNLLYQLGFKGTPSEQINKAYKTAPELLSACYSASSMWTANAATVSASVDTEDNKVHFTAANLISNLHRHQEADFSKKLLEFIFSNSDYFNHHPLLPKSMGTSDEGAANHNRLCQSHAHSGINLFVYGKKVLGNHQFEQSPIKYPARQTKEASEAIARNHLLNPERVIFACQNPLAIDQGVFHNDVISVANEHVFLVHEEAFYNQAYVLDQLREKADFPLVIIQISKEQISVSEAVDTYLFNSQLITLPDQKNMILIAPAECQANLKVKTCIDGLVADPQNPINSVYYLDLKQSMRNGGGPACLRLRVPLNDYELKAMHQGILIDNDLLDILDKWVLKYYRTELKIPDLADPQLLYECLDALDELTQILKLGSIYPFQS.

Residues 19–28 (AGLSSGNIAS), N110, and 137–138 (HR) each bind substrate. E174 is an active-site residue. A substrate-binding site is contributed by R216. Residue H252 is part of the active site. Substrate is bound by residues D254 and N366. The Nucleophile role is filled by C372.

The protein belongs to the succinylarginine dihydrolase family. In terms of assembly, homodimer.

The catalysed reaction is N(2)-succinyl-L-arginine + 2 H2O + 2 H(+) = N(2)-succinyl-L-ornithine + 2 NH4(+) + CO2. It functions in the pathway amino-acid degradation; L-arginine degradation via AST pathway; L-glutamate and succinate from L-arginine: step 2/5. Functionally, catalyzes the hydrolysis of N(2)-succinylarginine into N(2)-succinylornithine, ammonia and CO(2). The chain is N-succinylarginine dihydrolase from Legionella pneumophila (strain Corby).